A 474-amino-acid polypeptide reads, in one-letter code: Replication factor C large subunit (474 aa).

Residue 45–52 (GPPGCGKT) participates in ATP binding. Residues 415 to 468 (DKKTNNKKGKENKTKNTTKKIKEIKETPKKEEVKEPKKQIEKQKSEKKEPKKQM) show a composition bias toward basic and acidic residues. The tract at residues 415-474 (DKKTNNKKGKENKTKNTTKKIKEIKETPKKEEVKEPKKQIEKQKSEKKEPKKQMTLESFF) is disordered.

This sequence belongs to the activator 1 small subunits family. RfcL subfamily. Heteromultimer composed of small subunits (RfcS) and large subunits (RfcL).

Part of the RFC clamp loader complex which loads the PCNA sliding clamp onto DNA. In Methanococcus aeolicus (strain ATCC BAA-1280 / DSM 17508 / OCM 812 / Nankai-3), this protein is Replication factor C large subunit.